The sequence spans 302 residues: Phosphoribosylaminoimidazole-succinocarboxamide synthase (302 aa).

Belongs to the SAICAR synthetase family.

The enzyme catalyses 5-amino-1-(5-phospho-D-ribosyl)imidazole-4-carboxylate + L-aspartate + ATP = (2S)-2-[5-amino-1-(5-phospho-beta-D-ribosyl)imidazole-4-carboxamido]succinate + ADP + phosphate + 2 H(+). It functions in the pathway purine metabolism; IMP biosynthesis via de novo pathway; 5-amino-1-(5-phospho-D-ribosyl)imidazole-4-carboxamide from 5-amino-1-(5-phospho-D-ribosyl)imidazole-4-carboxylate: step 1/2. This chain is Phosphoribosylaminoimidazole-succinocarboxamide synthase, found in Cupriavidus necator (strain ATCC 17699 / DSM 428 / KCTC 22496 / NCIMB 10442 / H16 / Stanier 337) (Ralstonia eutropha).